The chain runs to 238 residues: Survival of motor neuron-related-splicing factor 30 (238 aa).

The Tudor domain occupies 72–132 (SWKVGDKCMA…KPVEEGRKAK (61 aa)). A Nuclear localization signal motif is present at residues 142–160 (KKEMIAQQREYKKKKALKK). Residue serine 201 is modified to Phosphoserine. Residue lysine 219 is modified to N6-acetyllysine.

The protein belongs to the SMN family. In terms of assembly, associates with spliceosomes. Associates with U4/U5/U6 tri-snRNP and with U2 snRNP.

The protein resides in the nucleus speckle. It is found in the nucleus. The protein localises to the cajal body. In terms of biological role, involved in spliceosome assembly. This chain is Survival of motor neuron-related-splicing factor 30 (SMNDC1), found in Bos taurus (Bovine).